The sequence spans 288 residues: UPF0761 membrane protein HS_0693 (288 aa).

Transmembrane regions (helical) follow at residues 36 to 56, 92 to 112, 127 to 147, 176 to 196, 200 to 220, and 240 to 260; these read TLAL…FPVF, QMSA…IHSI, PAIF…IVIA, LLSL…YMVV, KVSI…FTLG, and AMAT…AVLL.

Belongs to the UPF0761 family.

It localises to the cell inner membrane. The protein is UPF0761 membrane protein HS_0693 of Histophilus somni (strain 129Pt) (Haemophilus somnus).